The sequence spans 230 residues: 2-C-methyl-D-erythritol 4-phosphate cytidylyltransferase (230 aa).

It belongs to the IspD/TarI cytidylyltransferase family. IspD subfamily.

The enzyme catalyses 2-C-methyl-D-erythritol 4-phosphate + CTP + H(+) = 4-CDP-2-C-methyl-D-erythritol + diphosphate. It participates in isoprenoid biosynthesis; isopentenyl diphosphate biosynthesis via DXP pathway; isopentenyl diphosphate from 1-deoxy-D-xylulose 5-phosphate: step 2/6. Functionally, catalyzes the formation of 4-diphosphocytidyl-2-C-methyl-D-erythritol from CTP and 2-C-methyl-D-erythritol 4-phosphate (MEP). The sequence is that of 2-C-methyl-D-erythritol 4-phosphate cytidylyltransferase from Laribacter hongkongensis (strain HLHK9).